We begin with the raw amino-acid sequence, 316 residues long: Small ribosomal subunit protein mS26 (316 aa).

Residues 41 to 71 (TTRSARDSVSIPPDSPNYIKVPEPPQSSEVR) form a disordered region.

The protein belongs to the mitochondrion-specific ribosomal protein mS26 family. In terms of assembly, component of the mitochondrial small ribosomal subunit (mt-SSU). Mature N.crassa 74S mitochondrial ribosomes consist of a small (37S) and a large (54S) subunit. The 37S small subunit contains a 16S ribosomal RNA (16S mt-rRNA) and 32 different proteins. The 54S large subunit contains a 23S rRNA (23S mt-rRNA) and 42 different proteins.

The protein localises to the mitochondrion. In terms of biological role, component of the mitochondrial ribosome (mitoribosome), a dedicated translation machinery responsible for the synthesis of mitochondrial genome-encoded proteins, including at least some of the essential transmembrane subunits of the mitochondrial respiratory chain. The mitoribosomes are attached to the mitochondrial inner membrane and translation products are cotranslationally integrated into the membrane. This chain is Small ribosomal subunit protein mS26 (pet123), found in Neurospora crassa (strain ATCC 24698 / 74-OR23-1A / CBS 708.71 / DSM 1257 / FGSC 987).